A 196-amino-acid chain; its full sequence is Aequorin-1 (196 aa).

Positions 1–7 (MTSEQYS) are excised as a propeptide. EF-hand domains are found at residues 18 to 53 (KWIG…IVIN), 54 to 108 (NLGA…SKNQ), 111 to 146 (LIRL…DGII), and 147 to 182 (QSSE…FWYT). The Ca(2+) site is built by Asp-31, Asn-33, Asn-35, Arg-37, and Glu-42. May interact with the chromophore stretches follow at residues 47–57 (ASDIVINNLGA), 62–72 (AKRHKDAVEAF), and 107–117 (NQITLIRLWGD). Residues Asp-124, Asp-126, Asn-128, Glu-135, Asp-160, Asp-162, Ser-164, Gln-166, and Glu-171 each contribute to the Ca(2+) site.

The protein belongs to the aequorin family. Post-translationally, the reduction of the disulfide bond is necessary to regenerate aequorin from apoaequorin.

Its function is as follows. Ca(2+)-dependent bioluminescence photoprotein. Displays an emission peak at 470 nm (blue light). Trace amounts of calcium ion trigger the intramolecular oxidation of the chromophore, coelenterazine into coelenteramide and CO(2) with the concomitant emission of light. This is Aequorin-1 from Aequorea victoria (Water jellyfish).